Reading from the N-terminus, the 181-residue chain is CDP-diacylglycerol--glycerol-3-phosphate 3-phosphatidyltransferase (181 aa).

4 helical membrane passes run 8–28, 35–55, 64–84, and 148–168; these read PNYL…TFYI, MLGA…GYIA, FGKM…IIML, and IIYL…LTII.

This sequence belongs to the CDP-alcohol phosphatidyltransferase class-I family.

It is found in the cell membrane. It carries out the reaction a CDP-1,2-diacyl-sn-glycerol + sn-glycerol 3-phosphate = a 1,2-diacyl-sn-glycero-3-phospho-(1'-sn-glycero-3'-phosphate) + CMP + H(+). The protein operates within phospholipid metabolism; phosphatidylglycerol biosynthesis; phosphatidylglycerol from CDP-diacylglycerol: step 1/2. Functionally, this protein catalyzes the committed step to the synthesis of the acidic phospholipids. This is CDP-diacylglycerol--glycerol-3-phosphate 3-phosphatidyltransferase (pgsA) from Rickettsia bellii (strain RML369-C).